We begin with the raw amino-acid sequence, 401 residues long: Glucose-6-phosphate isomerase (401 aa).

Catalysis depends on Glu-261, which acts as the Proton donor. Residues His-282 and Lys-392 contribute to the active site.

This sequence belongs to the GPI family. In terms of assembly, homodimer.

It is found in the cytoplasm. It carries out the reaction alpha-D-glucose 6-phosphate = beta-D-fructose 6-phosphate. It participates in carbohydrate biosynthesis; gluconeogenesis. It functions in the pathway carbohydrate degradation; glycolysis; D-glyceraldehyde 3-phosphate and glycerone phosphate from D-glucose: step 2/4. Its activity is regulated as follows. Competively inhibited by 6-phosphogluconate and erythrose 4-phosphate. Its function is as follows. Catalyzes the isomerization of glucose-6-P to fructose-6-P. This Methanocaldococcus jannaschii (strain ATCC 43067 / DSM 2661 / JAL-1 / JCM 10045 / NBRC 100440) (Methanococcus jannaschii) protein is Glucose-6-phosphate isomerase.